The sequence spans 38 residues: Large ribosomal subunit protein bL36 (38 aa).

The protein belongs to the bacterial ribosomal protein bL36 family.

In Buchnera aphidicola subsp. Cinara cedri (strain Cc), this protein is Large ribosomal subunit protein bL36.